Consider the following 211-residue polypeptide: MLTIALSKGRILDDTLPLLAEAGIVPTENPDKSRKLIIPTTQDDVRLLIVRATDVPTYVEHGAADLGVAGKDVLMEYGGQGLYEPLDLQIAQCKLMTAGVVGAAEPKGRLRVATKFVNVAKRYYAEQGRQVDIIKLYGSMELAPLINLADKIIDVVDTGNTLRANGLEPQELIATISSRLVVNKASMKMQHARIQSLIDTLRQAVESRHRG.

Belongs to the ATP phosphoribosyltransferase family. Short subfamily. In terms of assembly, heteromultimer composed of HisG and HisZ subunits.

The protein localises to the cytoplasm. The enzyme catalyses 1-(5-phospho-beta-D-ribosyl)-ATP + diphosphate = 5-phospho-alpha-D-ribose 1-diphosphate + ATP. It functions in the pathway amino-acid biosynthesis; L-histidine biosynthesis; L-histidine from 5-phospho-alpha-D-ribose 1-diphosphate: step 1/9. Its function is as follows. Catalyzes the condensation of ATP and 5-phosphoribose 1-diphosphate to form N'-(5'-phosphoribosyl)-ATP (PR-ATP). Has a crucial role in the pathway because the rate of histidine biosynthesis seems to be controlled primarily by regulation of HisG enzymatic activity. The chain is ATP phosphoribosyltransferase from Pseudomonas putida (strain ATCC 700007 / DSM 6899 / JCM 31910 / BCRC 17059 / LMG 24140 / F1).